The following is a 447-amino-acid chain: GTPase Der (447 aa).

EngA-type G domains follow at residues 3 to 167 (PVIA…VQER) and 181 to 354 (VKIA…AAAM). Residues 9 to 16 (GRPNVGKS), 56 to 60 (DTGGF), 119 to 122 (NKAE), 187 to 194 (GRPNVGKS), 234 to 238 (DTAGL), and 299 to 302 (NKWD) each bind GTP. One can recognise a KH-like domain in the interval 355–439 (VKLPTPQLTR…PLRIEFRTNK (85 aa)).

This sequence belongs to the TRAFAC class TrmE-Era-EngA-EngB-Septin-like GTPase superfamily. EngA (Der) GTPase family. Associates with the 50S ribosomal subunit.

Functionally, GTPase that plays an essential role in the late steps of ribosome biogenesis. The chain is GTPase Der from Cupriavidus taiwanensis (strain DSM 17343 / BCRC 17206 / CCUG 44338 / CIP 107171 / LMG 19424 / R1) (Ralstonia taiwanensis (strain LMG 19424)).